We begin with the raw amino-acid sequence, 807 residues long: Glycerol-3-phosphate acyltransferase (807 aa).

The HXXXXD motif motif lies at 305–310 (CHRSHM).

It belongs to the GPAT/DAPAT family.

The protein localises to the cell inner membrane. It catalyses the reaction sn-glycerol 3-phosphate + an acyl-CoA = a 1-acyl-sn-glycero-3-phosphate + CoA. Its pathway is phospholipid metabolism; CDP-diacylglycerol biosynthesis; CDP-diacylglycerol from sn-glycerol 3-phosphate: step 1/3. The protein is Glycerol-3-phosphate acyltransferase of Escherichia coli O139:H28 (strain E24377A / ETEC).